A 467-amino-acid polypeptide reads, in one-letter code: Megakaryocyte-associated tyrosine-protein kinase (467 aa).

The interval 1 to 20 (MPTQRWAPGTQCMTKCENSR) is disordered. An SH3 domain is found at 7–69 (APGTQCMTKC…AAAALRQREA (63 aa)). One can recognise an SH2 domain in the interval 81–170 (WFHGKISGQE…AICTKLVKPK (90 aa)). Residues 194-443 (LTLGAQIGEG…IVEKLGRELR (250 aa)) form the Protein kinase domain. ATP contacts are provided by residues 200-208 (IGEGEFGAV) and K221. D311 functions as the Proton acceptor in the catalytic mechanism. The tract at residues 445-467 (VGVAAPAGGQEAEGSAPTRSQDP) is disordered.

It belongs to the protein kinase superfamily. Tyr protein kinase family. CSK subfamily. In terms of assembly, interacts with KIT. Enriched in lymphoid tissues.

It is found in the cytoplasm. Its subcellular location is the membrane. The enzyme catalyses L-tyrosyl-[protein] + ATP = O-phospho-L-tyrosyl-[protein] + ADP + H(+). Functionally, could play a significant role in the signal transduction of hematopoietic cells. May regulate tyrosine kinase activity of SRC-family members in brain. The sequence is that of Megakaryocyte-associated tyrosine-protein kinase (Matk) from Rattus norvegicus (Rat).